The following is a 447-amino-acid chain: Tubulin beta chain (447 aa).

Residues Gln-11, Glu-69, Ser-138, Gly-142, Thr-143, Gly-144, Asn-204, and Asn-226 each coordinate GTP. Glu-69 contacts Mg(2+).

This sequence belongs to the tubulin family. Dimer of alpha and beta chains. A typical microtubule is a hollow water-filled tube with an outer diameter of 25 nm and an inner diameter of 15 nM. Alpha-beta heterodimers associate head-to-tail to form protofilaments running lengthwise along the microtubule wall with the beta-tubulin subunit facing the microtubule plus end conferring a structural polarity. Microtubules usually have 13 protofilaments but different protofilament numbers can be found in some organisms and specialized cells. The cofactor is Mg(2+).

It is found in the cytoplasm. The protein localises to the cytoskeleton. In terms of biological role, tubulin is the major constituent of microtubules, a cylinder consisting of laterally associated linear protofilaments composed of alpha- and beta-tubulin heterodimers. Microtubules grow by the addition of GTP-tubulin dimers to the microtubule end, where a stabilizing cap forms. Below the cap, tubulin dimers are in GDP-bound state, owing to GTPase activity of alpha-tubulin. This Penicillium digitatum (Green mold) protein is Tubulin beta chain (TUB2).